Consider the following 622-residue polypeptide: MAETPQPYLIFVFFVFTLTVATQTTGSVKCKTSLLRYPFGFSDGYPIRFNCSEITGEAVIGEFAVQEVTNSNIYVEIPPVCKRNIRKIEQLFRENLAPSKLQNIILVQGCKKQNKSSNCLIRNKFVENRLNLSKCKSPVSCLDGATTTTADVMSLGDVVNGSGCKYWFSSISQSQVSVNLGRLKLDWWLKGSCSNTTCSENADCAKVKLDDGGLGHRCTCREGFSGKAFTVPGGCHRLVYKRKGLHKLVVLGTAGILVGVLVIVVLIATYFFRNKQSASSERASIANRLLCELAGNSSVPFYTYKEIEKATDSFSDKNMLGTGAYGTVYAGEFPNSSCVAIKRLKHKDTTSIDQVVNEIKLLSSVSHPNLVRLLGCCFADGEPFLVYEFMPNGTLYQHLQHERGQPPLSWQLRLAIACQTANAIAHLHSSVNPPIYHRDIKSSNILLDHEFNSKISDFGLSRLGMSTDFEASHISTAPQGTPGYLDPQYHQDFQLSDKSDVYSFGVVLVEIISGFKVIDFTRPYSEVNLASLAVDRIGRGRVVDIIDPCLNKEINPKMFASIHNLAELAFRCLSFHRNMRPTMVEITEDLHRIKLMHYGTESGKFKNRSEIDMKRQQSFPRE.

The signal sequence occupies residues 1–21 (MAETPQPYLIFVFFVFTLTVA). At 22 to 247 (TQTTGSVKCK…LVYKRKGLHK (226 aa)) the chain is on the extracellular side. N-linked (GlcNAc...) asparagine glycosylation is found at N50, N114, N131, N160, and N195. The chain crosses the membrane as a helical span at residues 248 to 268 (LVVLGTAGILVGVLVIVVLIA). Residues 269-622 (TYFFRNKQSA…MKRQQSFPRE (354 aa)) lie on the Cytoplasmic side of the membrane. In terms of domain architecture, Protein kinase spans 314 to 594 (FSDKNMLGTG…EITEDLHRIK (281 aa)). Residues 320 to 328 (LGTGAYGTV) and K342 each bind ATP. Residue D439 is the Proton acceptor of the active site.

The protein belongs to the protein kinase superfamily. Ser/Thr protein kinase family.

It localises to the membrane. It carries out the reaction L-seryl-[protein] + ATP = O-phospho-L-seryl-[protein] + ADP + H(+). The enzyme catalyses L-threonyl-[protein] + ATP = O-phospho-L-threonyl-[protein] + ADP + H(+). In terms of biological role, serine/threonine-protein kinase that may function as a signaling receptor of extracellular matrix component. The sequence is that of Wall-associated receptor kinase-like 21 (WAKL21) from Arabidopsis thaliana (Mouse-ear cress).